The sequence spans 102 residues: Large ribosomal subunit protein bL21 (102 aa).

Belongs to the bacterial ribosomal protein bL21 family. In terms of assembly, part of the 50S ribosomal subunit. Contacts protein L20.

Its function is as follows. This protein binds to 23S rRNA in the presence of protein L20. This is Large ribosomal subunit protein bL21 from Phytoplasma australiense.